Consider the following 36-residue polypeptide: Photosystem I reaction center subunit VIII (36 aa).

Residues 7–29 form a helical membrane-spanning segment; it reads PSILVPLVGILLPAVTMASLFLY.

The protein belongs to the PsaI family.

It is found in the plastid. Its subcellular location is the chloroplast thylakoid membrane. In terms of biological role, may help in the organization of the PsaL subunit. The protein is Photosystem I reaction center subunit VIII of Adiantum capillus-veneris (Maidenhair fern).